We begin with the raw amino-acid sequence, 1017 residues long: MMSEGKPPDKKRPRRSLSISKNKKKASNSIISCFNNAPPAKLACPVCSKMVPRYDLNRHLDEMCANNDFVQVDPGQVGLINSNVSMVDLTSVTLEDVTPKKSPPPKTNLTPGQSDSAKREVKQKISPYFKSNDVVCKNQDELRNRSVKVICLGSLASKLSRKYVKAKKSIDKDEEFAGSSPQSSKSTVVKSLIDNSSEIEDEDQILENSSQKENVFKCDSLKEECIPEHMVRGSKIMEAESQKATRECEKSALTPGFSDNAIMLFSPDFTLRNTLKSTSEDSLVKQECIKEVVEKREACHCEEVKMTVASEAKIQLSDSEAKSHSSADDASAWSNIQEAPLQDDSCLNNDIPHSIPLEQGSSCNGPGQTTGHPYYLRSFLVVLKTVLENEDDMLLFDEQEKGIVTKFYQLSATGQKLYVRLFQRKLSWIKMTKLEYEEIALDLTPVIEELTNAGFLQTESELQELSEVLELLSAPELKSLAKTFHLVNPNGQKQQLVDAFLKLAKQRSVCTWGKNKPGIGAVILKRAKALAGQSVRICKGPRAVFSRILLLFSLTDSMEDEDAACGGQGQLSTVLLVNLGRMEFPSYTINRKTHIFQDRDDLIRYAAATHMLSDISSAMANGNWEEAKELAQCAKRDWNRLKNHPSLRCHEDLPLFLRCFTVGWIYTRILSRFVEILQRLHMYEEAVRELESLLSQRIYCPDSRGRWWDRLALNLHQHLKRLEPTIKCITEGLADPEVRTGHRLSLYQRAVRLRESPSCKKFKHLFQQLPEMAVQDVKHVTITGRLCPQRGMCKSVFVMEAGEAADPTTVLCSVEELALAHYRRSGFDQGIHGEGSTFSTLYGLLLWDIIFMDGIPDVFRNACQAFPLDLCTDSFFTSRRPALEARLQLIHDAPEESLRAWVAATWHEQEGRVASLVSWDRFTSLQQAQDLVSCLGGPVLSGVCRHLAADFRHCRGGLPDLVVWNSQSRHFKLVEVKGPNDRLSHKQMIWLAELQKLGAEVEVCHVVAVGAKSQSLS.

Positions 1–10 (MMSEGKPPDK) are enriched in basic and acidic residues. Positions 1 to 23 (MMSEGKPPDKKRPRRSLSISKNK) are disordered. Residues 11-23 (KRPRRSLSISKNK) show a composition bias toward basic residues. Positions 14-22 (RRSLSISKN) match the D-box motif. The segment at 41-69 (KLACPVCSKMVPRYDLNRHLDEMCANNDF) adopts a UBZ4-type zinc-finger fold. The Zn(2+) site is built by C44, C47, H59, and C64. 2 disordered regions span residues 95–121 (EDVT…KREV) and 170–189 (IDKD…STVV). The segment covering 179–189 (SSPQSSKSTVV) has biased composition (polar residues). A Phosphoserine modification is found at S180. Residues 212–214 (KEN) carry the KEN box motif. Residues 671–696 (SRFVEILQRLHMYEEAVRELESLLSQ) are a coiled coil. Residues E834, D960, E975, and V976 each contribute to the Mn(2+) site. In terms of domain architecture, VRR-NUC spans 895-1007 (EESLRAWVAA…GAEVEVCHVV (113 aa)).

This sequence belongs to the FAN1 family. Interacts with FANCD2 (when monoubiquitinated). Interacts with FANCI, MLH1, MLH3 and PMS2. It depends on Mn(2+) as a cofactor. Requires Mg(2+) as cofactor. Ubiquitinated and degraded during mitotic exit by the APC/C-Cdh1 complex.

It is found in the nucleus. The catalysed reaction is Hydrolytically removes 5'-nucleotides successively from the 3'-hydroxy termini of 3'-hydroxy-terminated oligonucleotides.. Nuclease required for the repair of DNA interstrand cross-links (ICL) recruited at sites of DNA damage by monoubiquitinated FANCD2. Specifically involved in repair of ICL-induced DNA breaks by being required for efficient homologous recombination, probably in the resolution of homologous recombination intermediates. Not involved in DNA double-strand breaks resection. Acts as a 5'-3' exonuclease that anchors at a cut end of DNA and cleaves DNA successively at every third nucleotide, allowing to excise an ICL from one strand through flanking incisions. Probably keeps excising with 3'-flap annealing until it reaches and unhooks the ICL. Acts at sites that have a 5'-terminal phosphate anchor at a nick or a 1- or 2-nucleotide flap and is augmented by a 3' flap. Also has endonuclease activity toward 5'-flaps. The protein is Fanconi-associated nuclease 1 of Homo sapiens (Human).